Reading from the N-terminus, the 443-residue chain is Aspartate--tRNA(Asp/Asn) ligase (443 aa).

E175 contacts L-aspartate. Residues 197–200 (QLFK) are aspartate. R219 contacts L-aspartate. Residues 219–221 (RAE), 227–229 (RHL), and E366 contribute to the ATP site. Positions 366 and 369 each coordinate Mg(2+). The L-aspartate site is built by S369 and R373. Position 414 to 417 (414 to 417 (GCER)) interacts with ATP.

This sequence belongs to the class-II aminoacyl-tRNA synthetase family. Type 2 subfamily. Homodimer. Mg(2+) is required as a cofactor.

It is found in the cytoplasm. The enzyme catalyses tRNA(Asx) + L-aspartate + ATP = L-aspartyl-tRNA(Asx) + AMP + diphosphate. Its function is as follows. Aspartyl-tRNA synthetase with relaxed tRNA specificity since it is able to aspartylate not only its cognate tRNA(Asp) but also tRNA(Asn). Reaction proceeds in two steps: L-aspartate is first activated by ATP to form Asp-AMP and then transferred to the acceptor end of tRNA(Asp/Asn). This Methanococcoides burtonii (strain DSM 6242 / NBRC 107633 / OCM 468 / ACE-M) protein is Aspartate--tRNA(Asp/Asn) ligase.